The sequence spans 320 residues: ATP-dependent 6-phosphofructokinase (320 aa).

Gly12 is an ATP binding site. 22 to 26 (RGVVR) provides a ligand contact to ADP. ATP is bound by residues 73–74 (RF) and 103–106 (GDGS). Asp104 is a Mg(2+) binding site. Position 126-128 (126-128 (TID)) interacts with substrate. The Proton acceptor role is filled by Asp128. ADP is bound at residue Arg155. Substrate is bound by residues Arg163 and 170-172 (MGR). ADP contacts are provided by residues 186-188 (GCE), Lys212, and 214-216 (KKH). Substrate is bound by residues Glu223, Arg244, and 250–253 (HIQR).

Belongs to the phosphofructokinase type A (PFKA) family. ATP-dependent PFK group I subfamily. Prokaryotic clade 'B1' sub-subfamily. In terms of assembly, homotetramer. The cofactor is Mg(2+).

The protein localises to the cytoplasm. The catalysed reaction is beta-D-fructose 6-phosphate + ATP = beta-D-fructose 1,6-bisphosphate + ADP + H(+). It participates in carbohydrate degradation; glycolysis; D-glyceraldehyde 3-phosphate and glycerone phosphate from D-glucose: step 3/4. With respect to regulation, allosterically activated by ADP and other diphosphonucleosides, and allosterically inhibited by phosphoenolpyruvate. In terms of biological role, catalyzes the phosphorylation of D-fructose 6-phosphate to fructose 1,6-bisphosphate by ATP, the first committing step of glycolysis. This Vibrio vulnificus (strain CMCP6) protein is ATP-dependent 6-phosphofructokinase.